The sequence spans 304 residues: Sulfate adenylyltransferase subunit 2 2 (304 aa).

Belongs to the PAPS reductase family. CysD subfamily. Heterodimer composed of CysD, the smaller subunit, and CysN.

It carries out the reaction sulfate + ATP + H(+) = adenosine 5'-phosphosulfate + diphosphate. The protein operates within sulfur metabolism; hydrogen sulfide biosynthesis; sulfite from sulfate: step 1/3. Functionally, with CysN forms the ATP sulfurylase (ATPS) that catalyzes the adenylation of sulfate producing adenosine 5'-phosphosulfate (APS) and diphosphate, the first enzymatic step in sulfur assimilation pathway. APS synthesis involves the formation of a high-energy phosphoric-sulfuric acid anhydride bond driven by GTP hydrolysis by CysN coupled to ATP hydrolysis by CysD. The polypeptide is Sulfate adenylyltransferase subunit 2 2 (Marinobacter nauticus (strain ATCC 700491 / DSM 11845 / VT8) (Marinobacter aquaeolei)).